A 324-amino-acid polypeptide reads, in one-letter code: MDIKVMEYAAEIARRQSFTKAAEHLHIAQPSLSQQIKKLEAELGLTLFHRSHGSVTLTPHGRRFIEKAEDIIRSRDDLLREMQERSQGIGHKLSIGIPAVTGRYLFPPLLKQFLARYPHVEVQLVEKDPVSLEKMTAKGEVDLSVLSLPIEDERLSITPLLTEPVVLAVPKEKQRWMPPELVALIEKALEEDEGRQPCVPIDMVRNVPFILLKEGFGFRRTVLDLCAESGFKPNAAFKTSHIETAQSLVANGLGVTMAPNMVRRDKDPGVIYLSIQSAPSRTLVFVFLKNRYVSLTAQAFMELSRESLKQTFDEGCLGNKDENI.

In terms of domain architecture, HTH lysR-type spans 1 to 58 (MDIKVMEYAAEIARRQSFTKAAEHLHIAQPSLSQQIKKLEAELGLTLFHRSHGSVTLT). The segment at residues 18-37 (FTKAAEHLHIAQPSLSQQIK) is a DNA-binding region (H-T-H motif).

The protein belongs to the LysR transcriptional regulatory family.

This is an uncharacterized protein from Bacillus subtilis (strain 168).